The primary structure comprises 237 residues: Ribosomal RNA small subunit methyltransferase G (237 aa).

S-adenosyl-L-methionine-binding positions include Gly-78, Phe-83, 129–130, and Arg-148; that span reads AE. The disordered stretch occupies residues 218–237; the sequence is KKETPNKFPRKAGMPNKRPL.

It belongs to the methyltransferase superfamily. RNA methyltransferase RsmG family.

The protein resides in the cytoplasm. Its function is as follows. Specifically methylates the N7 position of a guanine in 16S rRNA. The sequence is that of Ribosomal RNA small subunit methyltransferase G from Streptococcus suis (strain 98HAH33).